The following is a 345-amino-acid chain: N-malonyltransferase FDB2 (345 aa).

Cys-110 (acyl-thioester intermediate) is an active-site residue. His-158 serves as the catalytic Proton acceptor. The active site involves Asp-173.

Belongs to the arylamine N-acetyltransferase family.

The protein operates within xenobiotic degradation. Its function is as follows. N-malonyltransferase; part of the Fusarium detoxification of benzoxazolinone cluster 2 (FDB2) involved in the degradation of benzoxazolinones produced by the host plant. Maize, wheat, and rye produce the 2 benzoxazinone phytoanticipins 2,4-dihy-droxy-7-methoxy-1,4-benzoxazin-3-one (DIMBOA) and 2,4-dihydroxy-1,4-benzoxazin-3-one (DIBOA) that, due to their inherent instability once released, spontaneously degrade to the more stable corresponding benzoxazolinones, 6-methoxy-2-benzoxazolinone (MBOA) and 2-benzoxazolinone (BOA), respectively. The first step in the detoxification of benzoxazolinones involves the hydrolysis of the cyclic ester bond of benzoxazolinones by the FDB1 cluster gamma-lactamase MBL1 to aminophenols. MBL1 is able to convert BOA into 2-aminophenol (2-AP), as well as MBOA into 5-methoxy-2-aminophenol (2-AMP). The FDB2 cluster N-malonyltransferase FDB2/NAT1 then metabolizes aminophenols via N-malonylation to non-toxic malonamic acids. FDB2/NAT1 converts 2-AP into N-(2-hydroxyphenyl) malonamic acid (HPMA) and 2-AMP into N-(2-hydroxy-4-methoxyphenyl) malonamic acid (HMPMA). The duplicated dienlactone hydrolases DLH1 and DLH2 may provide redundant function for hydrolyzing the lactone moiety in the BOA molecule. The roles of the amidases an other enzymes encoded by the 2 FDB clusters have not been identified so far. In Gibberella moniliformis (strain M3125 / FGSC 7600) (Maize ear and stalk rot fungus), this protein is N-malonyltransferase FDB2.